Here is a 246-residue protein sequence, read N- to C-terminus: LexA repressor (246 aa).

Residues Met-1–Arg-34 are disordered. A DNA-binding region (H-T-H motif) is located at residues Met-52–Lys-72. Active-site for autocatalytic cleavage activity residues include Ser-170 and Lys-207.

The protein belongs to the peptidase S24 family. Homodimer.

It catalyses the reaction Hydrolysis of Ala-|-Gly bond in repressor LexA.. Functionally, represses a number of genes involved in the response to DNA damage (SOS response), including recA and lexA. In the presence of single-stranded DNA, RecA interacts with LexA causing an autocatalytic cleavage which disrupts the DNA-binding part of LexA, leading to derepression of the SOS regulon and eventually DNA repair. This Nocardioides sp. (strain ATCC BAA-499 / JS614) protein is LexA repressor.